The primary structure comprises 732 residues: Catalase-peroxidase (732 aa).

A disordered region spans residues 1–26; the sequence is MADNKKSPETGGITMQIPGKGRTNRD. A cross-link (tryptophyl-tyrosyl-methioninium (Trp-Tyr) (with M-245)) is located at residues 96–219; it reads WHSAGTYRTF…LAAVQMGLIY (124 aa). Histidine 97 acts as the Proton acceptor in catalysis. The tryptophyl-tyrosyl-methioninium (Tyr-Met) (with W-96) cross-link spans 219–245; sequence YVNPEGPDGNPDPVAAARDIREVFARM. A heme b-binding site is contributed by histidine 260. The disordered stretch occupies residues 344-365; it reads KPKGEAGAGTVPDPHDPKKRHA.

Belongs to the peroxidase family. Peroxidase/catalase subfamily. As to quaternary structure, homodimer or homotetramer. It depends on heme b as a cofactor. Formation of the three residue Trp-Tyr-Met cross-link is important for the catalase, but not the peroxidase activity of the enzyme.

It carries out the reaction H2O2 + AH2 = A + 2 H2O. It catalyses the reaction 2 H2O2 = O2 + 2 H2O. In terms of biological role, bifunctional enzyme with both catalase and broad-spectrum peroxidase activity. The chain is Catalase-peroxidase from Methanospirillum hungatei JF-1 (strain ATCC 27890 / DSM 864 / NBRC 100397 / JF-1).